A 955-amino-acid chain; its full sequence is 2-oxoglutarate dehydrogenase E1 component (955 aa).

This sequence belongs to the alpha-ketoglutarate dehydrogenase family. As to quaternary structure, homodimer. Part of the 2-oxoglutarate dehydrogenase (OGDH) complex composed of E1 (2-oxoglutarate dehydrogenase), E2 (dihydrolipoamide succinyltransferase) and E3 (dihydrolipoamide dehydrogenase); the complex contains multiple copies of the three enzymatic components (E1, E2 and E3). Thiamine diphosphate serves as cofactor.

It catalyses the reaction N(6)-[(R)-lipoyl]-L-lysyl-[protein] + 2-oxoglutarate + H(+) = N(6)-[(R)-S(8)-succinyldihydrolipoyl]-L-lysyl-[protein] + CO2. In terms of biological role, E1 component of the 2-oxoglutarate dehydrogenase (OGDH) complex which catalyzes the decarboxylation of 2-oxoglutarate, the first step in the conversion of 2-oxoglutarate to succinyl-CoA and CO(2). This chain is 2-oxoglutarate dehydrogenase E1 component, found in Bacillus anthracis (strain A0248).